The chain runs to 182 residues: Putative manganese efflux pump MntP 1 (182 aa).

The next 6 membrane-spanning stretches (helical) occupy residues leucine 4–alanine 24, isoleucine 42–isoleucine 62, serine 63–tyrosine 83, leucine 103–isoleucine 123, valine 127–leucine 147, and isoleucine 162–phenylalanine 182.

The protein belongs to the MntP (TC 9.B.29) family.

It localises to the cell inner membrane. Its function is as follows. Probably functions as a manganese efflux pump. This is Putative manganese efflux pump MntP 1 from Wolinella succinogenes (strain ATCC 29543 / DSM 1740 / CCUG 13145 / JCM 31913 / LMG 7466 / NCTC 11488 / FDC 602W) (Vibrio succinogenes).